We begin with the raw amino-acid sequence, 325 residues long: MSKRIYSRIAGTGSYLPEKVLTNDDMSKIVDTSDEWIRSRTGIRERHIVADDQTTSDLAYFASLKAMEAAGVTADEIDLIVVGTTTPDLIFPSTACLLQARLGNVGCGAFDVNAACSGFVYALSVADKFVRSGDAKTVLVVGAETLTRIVDWTDRTTCVLFGDGAGAVVLKADEDTGILSTHLHADGSKKELLWDPVGVSVGFGEGKNGGGALLMKGNDVFKYAVKALDSVVDETLAANGLDTHDLDWLIPHQANLRIIEATAKRLDLPMEQVVVTVDRHGNTSSASVLLALDEAVRSGRVQRGQLLLLEAFGGGFTWGSALLRY.

Catalysis depends on residues C116 and H252. Residues 253–257 (QANLR) are ACP-binding. N282 is a catalytic residue.

The protein belongs to the thiolase-like superfamily. FabH family. As to quaternary structure, homodimer.

Its subcellular location is the cytoplasm. The enzyme catalyses butanoyl-CoA + malonyl-[ACP] + H(+) = 3-oxohexanoyl-[ACP] + CO2 + CoA. It carries out the reaction hexanoyl-CoA + malonyl-[ACP] + H(+) = 3-oxooctanoyl-[ACP] + CO2 + CoA. The catalysed reaction is octanoyl-CoA + malonyl-[ACP] + H(+) = 3-oxodecanoyl-[ACP] + CO2 + CoA. It catalyses the reaction decanoyl-CoA + malonyl-[ACP] + H(+) = 3-oxododecanoyl-[ACP] + CO2 + CoA. The enzyme catalyses 2-methylpropanoyl-CoA + malonyl-[ACP] + H(+) = 4-methyl-3-oxopentanoyl-[ACP] + CO2 + CoA. It carries out the reaction 3-methylbutanoyl-CoA + malonyl-[ACP] + H(+) = 5-methyl-3-oxohexanoyl-[ACP] + CO2 + CoA. The catalysed reaction is malonyl-[ACP] + acetyl-CoA + H(+) = 3-oxobutanoyl-[ACP] + CO2 + CoA. The protein operates within lipid metabolism; fatty acid biosynthesis. Its function is as follows. Catalyzes the condensation reaction of fatty acid synthesis by the addition to an acyl acceptor of two carbons from malonyl-ACP. Catalyzes the first condensation reaction which initiates fatty acid synthesis and may therefore play a role in governing the total rate of fatty acid production. Possesses both acetoacetyl-ACP synthase and acetyl transacylase activities. Can use a wide range of acyl-CoAs as the primer substrate in vitro, with a slight preference for short, medium-straight chain acyl-CoAs. Can also use branched-chain acyl-CoAs and acetyl-CoA. The protein is Beta-ketoacyl-[acyl-carrier-protein] synthase III of Xanthomonas campestris pv. campestris (strain 8004).